The following is a 278-amino-acid chain: Alpha-tocopherol transfer protein (278 aa).

Residues R88–E253 enclose the CRAL-TRIO domain. Position 185 (D185) interacts with a 1,2-diacyl-sn-glycero-3-phospho-(1D-myo-inositol-3,4-bisphosphate). F187 contributes to the (+)-alpha-tocopherol binding site. K190–R192 provides a ligand contact to a 1,2-diacyl-sn-glycero-3-phospho-(1D-myo-inositol-3,4-bisphosphate). S208–K211 provides a ligand contact to a 1,2-diacyl-sn-glycero-3-phospho-(1D-myo-inositol-4,5-bisphosphate). 2 residues coordinate a 1,2-diacyl-sn-glycero-3-phospho-(1D-myo-inositol-3,4-bisphosphate): K217 and R221.

In terms of assembly, monomer and homotetramer. Phosphatidylinositol 4,5-bisphosphate binding induces the formation of homotetramers. Phosphatidylinositol 3,4-bisphosphate is less efficient in inducing tetramerization.

The protein localises to the cytoplasm. Functionally, binds (+)-alpha-tocopherol, enhances its transfer between separate membranes, and stimulates its release from liver cells. Binds both phosphatidylinositol 3,4-bisphosphate and phosphatidylinositol 4,5-bisphosphate; the resulting conformation change is important for the release of the bound alpha-tocopherol. The polypeptide is Alpha-tocopherol transfer protein (Ttpa) (Mus musculus (Mouse)).